Reading from the N-terminus, the 383-residue chain is MHC class I polypeptide-related sequence A (383 aa).

The first 23 residues, 1–23 (MGLGPVFLLLAGIFPFAPPGAAA), serve as a signal peptide directing secretion. At 24 to 307 (EPHSLRYNLT…GKVLVLQSHW (284 aa)) the chain is on the extracellular side. A glycan (N-linked (GlcNAc...) asparagine) is linked at asparagine 31. Cysteine 59 and cysteine 64 are oxidised to a cystine. Asparagine 79 carries N-linked (GlcNAc...) asparagine glycosylation. Cysteine 119 and cysteine 187 are oxidised to a cystine. The Ig-like C1-type domain maps to 207–296 (PMVNVTRSEA…SGNHSTHPVP (90 aa)). Residues asparagine 210, asparagine 220, and asparagine 261 are each glycosylated (N-linked (GlcNAc...) asparagine). A disulfide bridge connects residues cysteine 225 and cysteine 282. Residues 308 to 328 (QTFHVSAVAAAAIFVIIIFYV) traverse the membrane as a helical segment. Over 329-383 (RCCKKKTSAAEGPELVSLQVLDQHPVGTSDHRDATQLGFQPLMSDLGSTGSTEGA) the chain is Cytoplasmic. Residues cysteine 330 and cysteine 331 are each lipidated (S-palmitoyl cysteine).

This sequence belongs to the MHC class I family. MIC subfamily. In terms of assembly, unlike classical MHC class I molecules, does not form a heterodimer with beta-2-microglobulin. Binds as a monomer to a KLRK1/NKG2D homodimer. KLRK1 forms a complex with HCST/DAP10 in which KLRK1 binds MICA while HCST acts as an adapter molecule which enables signal transduction. Interacts with PDIA6 on the surface of tumor cells, leading to disulfide bond reduction which is required for release of MICA from tumor cells. (Microbial infection) Interacts with human cytomegalovirus/HHV-5 protein UL142. In terms of processing, N-glycosylated. Glycosylation is not essential for interaction with KLRK1/NKG2D but enhances complex formation. Proteolytically cleaved and released from the cell surface of tumor cells which impairs KLRK1/NKG2D expression and T-cell activation. Post-translationally, palmitoylated on cysteine residues in the cytoplasmic tail leading to its association with membrane microdomains enriched in cholesterol. In terms of processing, N-glycosylation is necessary for cell surface expression. (Microbial infection) Ubiquitinated by human herpesvirus 8 protein K5, leading to degradation. As to expression, widely expressed with the exception of the central nervous system where it is absent. Expressed predominantly in gastric epithelium and also in monocytes, keratinocytes, endothelial cells, fibroblasts and in the outer layer of Hassal's corpuscles within the medulla of normal thymus. In skin, expressed mainly in the keratin layers, basal cells, ducts and follicles. Also expressed in many, but not all, epithelial tumors of lung, breast, kidney, ovary, prostate and colon. In thyomas, overexpressed in cortical and medullar epithelial cells. Tumors expressing MICA display increased levels of gamma delta T-cells.

It is found in the cell membrane. The protein resides in the cytoplasm. In terms of biological role, widely expressed membrane-bound protein which acts as a ligand to stimulate an activating receptor KLRK1/NKG2D, expressed on the surface of essentially all human natural killer (NK), gammadelta T and CD8 alphabeta T-cells. Up-regulated in stressed conditions, such as viral and bacterial infections or DNA damage response, serves as signal of cellular stress, and engagement of KLRK1/NKG2D by MICA triggers NK-cells resulting in a range of immune effector functions, such as cytotoxicity and cytokine production. In Homo sapiens (Human), this protein is MHC class I polypeptide-related sequence A.